We begin with the raw amino-acid sequence, 324 residues long: tRNA-cytidine(32) 2-sulfurtransferase (324 aa).

Positions 1-26 (MQDLIDSPTAARTPAEEKIRHEGNKL) are disordered. Positions 14 to 26 (PAEEKIRHEGNKL) are enriched in basic and acidic residues. The short motif at 55–60 (SGGKDS) is the PP-loop motif element. [4Fe-4S] cluster-binding residues include C130, C133, and C221. A disordered region spans residues 278-310 (RPDANGDTAFDPIDPEDPREDAGDACASSPADG).

Belongs to the TtcA family. In terms of assembly, homodimer. It depends on Mg(2+) as a cofactor. [4Fe-4S] cluster is required as a cofactor.

The protein resides in the cytoplasm. The catalysed reaction is cytidine(32) in tRNA + S-sulfanyl-L-cysteinyl-[cysteine desulfurase] + AH2 + ATP = 2-thiocytidine(32) in tRNA + L-cysteinyl-[cysteine desulfurase] + A + AMP + diphosphate + H(+). It functions in the pathway tRNA modification. In terms of biological role, catalyzes the ATP-dependent 2-thiolation of cytidine in position 32 of tRNA, to form 2-thiocytidine (s(2)C32). The sulfur atoms are provided by the cysteine/cysteine desulfurase (IscS) system. In Bordetella petrii (strain ATCC BAA-461 / DSM 12804 / CCUG 43448), this protein is tRNA-cytidine(32) 2-sulfurtransferase.